A 552-amino-acid chain; its full sequence is CCR4-NOT transcription complex subunit 6 (552 aa).

LRR repeat units lie at residues 52–73 (HLTA…IAKL), 75–96 (NLVY…LGNM), 98–120 (SLRE…GKLF), and 121–143 (QLQT…CLEP). The interval 153–552 (LLDNLSVSTE…VNGIHLPGRR (400 aa)) is nuclease domain. Position 235 (E235) interacts with Mg(2+). Residues E235, E271, H356, and P361 each contribute to the substrate site. A Mg(2+)-binding site is contributed by D407. Catalysis depends on D407, which acts as the Proton donor/acceptor. Residues N409, N476, and F481 each contribute to the substrate site.

It belongs to the CCR4/nocturin family. As to quaternary structure, subunit of the CCR4-NOT core complex. Mg(2+) is required as a cofactor.

Its subcellular location is the cytoplasm. It localises to the nucleus. It carries out the reaction Exonucleolytic cleavage of poly(A) to 5'-AMP.. In terms of biological role, poly(A) nuclease involved in mRNA decay. Has 3'-5' RNase activity. The CCR4-NOT complex functions as a general transcription regulation complex. Enhances ligand-dependent transcriptional activity of nuclear hormone receptors. This is CCR4-NOT transcription complex subunit 6 (cnot6) from Xenopus laevis (African clawed frog).